The sequence spans 142 residues: Nucleoside diphosphate kinase (142 aa).

The ATP site is built by K11, F59, R87, T93, R107, and N117. H120 (pros-phosphohistidine intermediate) is an active-site residue.

This sequence belongs to the NDK family. As to quaternary structure, homotetramer. Requires Mg(2+) as cofactor.

It localises to the cytoplasm. The enzyme catalyses a 2'-deoxyribonucleoside 5'-diphosphate + ATP = a 2'-deoxyribonucleoside 5'-triphosphate + ADP. It catalyses the reaction a ribonucleoside 5'-diphosphate + ATP = a ribonucleoside 5'-triphosphate + ADP. Major role in the synthesis of nucleoside triphosphates other than ATP. The ATP gamma phosphate is transferred to the NDP beta phosphate via a ping-pong mechanism, using a phosphorylated active-site intermediate. The sequence is that of Nucleoside diphosphate kinase from Aquifex aeolicus (strain VF5).